A 537-amino-acid polypeptide reads, in one-letter code: MNSSRSLLALALLFISFLVYQQWEIDKAPKPVVRETAVSQSDTPNSSSASTSAVDSQAKGRVITLQNDVFRLKVDTLGGDVIESELLNYAQELNGEERFTLLENKDGTTYVAQSGLVGKNGIDSAAGRADYQVNGDNFVLAEGQDELSVPFTFEKDGVIYRKIFMLKRGSYDIAVNYEIRNQSDETIEVQPYGQLKHTLVESSGSMAMPTYTGGAYSSSETNYKKYSFDDMKGANLSVNTKAGWVAVLQHYFVSAWIPNQDADNQLYTTTNNGMGFIGFRGPTVTVPAGATETVKTALWTGPKLQNQMGEVAEHLDLTVDYGWAWFIAKPLFALLTLIQSLVSNWGLAIIGVTLVVKAILYPLTKAQYTSMAKMRMLQPKLQEMRERFGDDRQRMSQEMMKLYKEEKVNPLGGCLPLLIQMPIFIALYWTFMEAVELRHAPFFGWIQDLSAQDPYYILPLLMGGSMFLLQKLSPTPVADPMQQKVMNFMPVIFTVFFLWFPAGLVLYWLVSNVITIIQQQLIYRGLEKKGLHSRKSK.

A run of 5 helical transmembrane segments spans residues 6 to 26 (SLLA…WEID), 341 to 363 (LVSN…LYPL), 411 to 431 (LGGC…YWTF), 449 to 469 (LSAQ…MFLL), and 490 to 510 (PVIF…YWLV).

Belongs to the OXA1/ALB3/YidC family. Type 1 subfamily. In terms of assembly, interacts with the Sec translocase complex via SecD. Specifically interacts with transmembrane segments of nascent integral membrane proteins during membrane integration.

It localises to the cell inner membrane. Its function is as follows. Required for the insertion and/or proper folding and/or complex formation of integral membrane proteins into the membrane. Involved in integration of membrane proteins that insert both dependently and independently of the Sec translocase complex, as well as at least some lipoproteins. Aids folding of multispanning membrane proteins. The polypeptide is Membrane protein insertase YidC (Actinobacillus succinogenes (strain ATCC 55618 / DSM 22257 / CCUG 43843 / 130Z)).